The sequence spans 176 residues: DNA repair RAD52-like protein 1, mitochondrial (176 aa).

A mitochondrion-targeting transit peptide spans 1 to 37 (MAGLGLRLKAAKWTLRSGSGAVSREWSSEMGKGVRRF).

This sequence belongs to the RAD52 family. In terms of assembly, interacts with WHY2. Expressed in root vascular tissue, tips of primary and secondary roots, young leaves, hydathodes, stomatal guard cells, cauline leaves, flower buds, stipules, carpels, pistils and anther filaments.

The protein localises to the mitochondrion. It localises to the nucleus. Plant-specific single-stranded DNA-binding protein required for efficient heterologous recombination-dependent DNA repair in nuclear and mitochondrial compartments. Forms large nucleo-protein complexes with WHY2 in mitochondria. Binds ssDNA with high affinity, but with little sequence specificity. Involved in double-stranded DNA break repair. Involved in the hydrolytic splicing pathway in mitochondrion. Facilitates the excision of two cis-spliced group II introns, NAD1 intron 2 and NAD2 intron 1. The sequence is that of DNA repair RAD52-like protein 1, mitochondrial from Arabidopsis thaliana (Mouse-ear cress).